Here is a 396-residue protein sequence, read N- to C-terminus: Serine/threonine-protein kinase GRIK1 (396 aa).

Residues 22 to 65 (ERSRHSPNPYDDDTYSHDSGETSNPGGDDEEGEEEEEVEELSRS) are disordered. Residues 48–60 (GDDEEGEEEEEVE) are compositionally biased toward acidic residues. One can recognise a Protein kinase domain in the interval 108–369 (FVRERKIGSG…LKAVAEHPWI (262 aa)). Residues 114–122 (IGSGSYGKV) and K137 each bind ATP. T154 is modified (phosphothreonine; by autocatalysis). D239 acts as the Proton acceptor in catalysis. S261 bears the Phosphoserine; by KIN10 mark.

The protein belongs to the protein kinase superfamily. Ser/Thr protein kinase family. As to quaternary structure, associates with the SNF1-related protein kinase (SnRK) complex. Interacts with AL1, a geminivirus (TGMV) protein essential for viral replication. Expressed in shoot apical meristem, leaf primordium and emerging petiole (at protein level).

The protein resides in the cytoplasm. The protein localises to the nucleus. The catalysed reaction is L-seryl-[protein] + ATP = O-phospho-L-seryl-[protein] + ADP + H(+). The enzyme catalyses L-threonyl-[protein] + ATP = O-phospho-L-threonyl-[protein] + ADP + H(+). With respect to regulation, activated when autophosphorylated at Thr-154 and inactivated when phosphorylated at Ser-261 by SnRK1.1/KIN10. Activates SnRK1.1/KIN10 and SnRK1.2/KIN11 by phosphorylation of their activation-loop 'Thr-198' and 'Thr-176', respectively. Required for the regulation by SnRK1 kinases of the transcription of a large set of genes, the modification the activity of metabolic enzymes, and the control of various nutrient-responsive cellular developmental processes. The protein is Serine/threonine-protein kinase GRIK1 (GRIK1) of Arabidopsis thaliana (Mouse-ear cress).